Reading from the N-terminus, the 430-residue chain is Glutamate-1-semialdehyde 2,1-aminomutase (430 aa).

At lysine 265 the chain carries N6-(pyridoxal phosphate)lysine.

It belongs to the class-III pyridoxal-phosphate-dependent aminotransferase family. HemL subfamily. Homodimer. The cofactor is pyridoxal 5'-phosphate.

Its subcellular location is the cytoplasm. The catalysed reaction is (S)-4-amino-5-oxopentanoate = 5-aminolevulinate. The protein operates within porphyrin-containing compound metabolism; protoporphyrin-IX biosynthesis; 5-aminolevulinate from L-glutamyl-tRNA(Glu): step 2/2. The sequence is that of Glutamate-1-semialdehyde 2,1-aminomutase from Shewanella baltica (strain OS195).